A 320-amino-acid polypeptide reads, in one-letter code: MRSAQVYRWQIPMDAGVVLRDRRLKTRDGLYVCLRDGEREGWGEISPLPGFSQETWEEAQTALLTWVNDWLQGSEGLPEMPSVAFGASCALAELTGVLPEAADYRAAPLCTGDPDDLVLRLADMPGEKIAKVKVGLYEAVRDGMVVNLLLEAIPDLHLRLDANRAWTPLKAQQFAKYVNPDYRARIAFLEEPCKTRDDSRAFARETGIAIAWDESLREADFTFEAEEGVKAVVIKPTLTGSLDKVREQVAAAHALGLTVVISSSIESSLGLTQLARIAAWLTPGTLPGLDTLHLMQAQQVRPWPGSALPCLKRDELERLL.

Lys133 acts as the Proton donor in catalysis. 3 residues coordinate Mg(2+): Asp161, Glu190, and Asp213. Residue Lys235 is the Proton acceptor of the active site.

Belongs to the mandelate racemase/muconate lactonizing enzyme family. MenC type 1 subfamily. Requires a divalent metal cation as cofactor.

It carries out the reaction (1R,6R)-6-hydroxy-2-succinyl-cyclohexa-2,4-diene-1-carboxylate = 2-succinylbenzoate + H2O. The protein operates within quinol/quinone metabolism; 1,4-dihydroxy-2-naphthoate biosynthesis; 1,4-dihydroxy-2-naphthoate from chorismate: step 4/7. It participates in quinol/quinone metabolism; menaquinone biosynthesis. Functionally, converts 2-succinyl-6-hydroxy-2,4-cyclohexadiene-1-carboxylate (SHCHC) to 2-succinylbenzoate (OSB). The sequence is that of o-succinylbenzoate synthase from Salmonella dublin (strain CT_02021853).